The chain runs to 388 residues: MKRRLIIAASLFVFNLSSGFAAENIPFSPQPPEIHAGSWVLMDYTTGQILTAGNEHQQRNPASLTKLMTGYVVDRAIDSHRITPDDIVTVGRDAWAKDNPVFVGSSLMFLKEGDRVSVRDLSRGLIVDSGNDACVALADYIAGGQRQFVEMMNNYAEKLHLKDTHFETVHGLDAPGQHSSAYDLAVLSRAIIHGEPEFYHMYSEKSLTWNGITQQNRNGLLWDKTMNVDGLKTGHTSGAGFNLIASAVDGQRRLIAVVMGADSAKGREEEARKLLRWGQQNFTTVQILHRGKKVGTERIWYGDKENIDLGTEQEFWMVLPKAEIPHIKAKYTLDGKELTAPISAHQRVGEIELYDRDKQVAHWPLVTLESVGEGSMFSRLSDYFHHKA.

Positions 1–21 are cleaved as a signal peptide; sequence MKRRLIIAASLFVFNLSSGFA. The active-site Acyl-ester intermediate is S63. The active-site Proton acceptor is K66. S129 is a catalytic residue. K232 lines the substrate pocket.

This sequence belongs to the peptidase S11 family.

The protein localises to the cell inner membrane. The enzyme catalyses Preferential cleavage: (Ac)2-L-Lys-D-Ala-|-D-Ala. Also transpeptidation of peptidyl-alanyl moieties that are N-acyl substituents of D-alanine.. It participates in cell wall biogenesis; peptidoglycan biosynthesis. Removes C-terminal D-alanyl residues from sugar-peptide cell wall precursors. This chain is D-alanyl-D-alanine carboxypeptidase DacD (dacD), found in Escherichia coli (strain K12).